A 216-amino-acid chain; its full sequence is MIDPLAALVPVVVEQTSRGERSFDIFSRLLRERIVFVTGEVEDNMASLIVAQLLFLESENPKKDIYMYINSPGGVVTAGMAIHDTMQYIRPRVGTVCIGQAASMGSFLLAAGEPGMRVALTNARVMVHQPSGGARGMASDIEIQAKEILRIRKRMNDLYVKYTGKSLKDIEKAMDRDTFLEADEAKEFGIVDHVYDRRPALPGDDAPRDVSEGPTP.

Ser103 functions as the Nucleophile in the catalytic mechanism. His128 is an active-site residue. Residues 197 to 216 (RRPALPGDDAPRDVSEGPTP) are disordered.

The protein belongs to the peptidase S14 family. As to quaternary structure, fourteen ClpP subunits assemble into 2 heptameric rings which stack back to back to give a disk-like structure with a central cavity, resembling the structure of eukaryotic proteasomes.

The protein localises to the cytoplasm. It catalyses the reaction Hydrolysis of proteins to small peptides in the presence of ATP and magnesium. alpha-casein is the usual test substrate. In the absence of ATP, only oligopeptides shorter than five residues are hydrolyzed (such as succinyl-Leu-Tyr-|-NHMec, and Leu-Tyr-Leu-|-Tyr-Trp, in which cleavage of the -Tyr-|-Leu- and -Tyr-|-Trp bonds also occurs).. Its function is as follows. Cleaves peptides in various proteins in a process that requires ATP hydrolysis. Has a chymotrypsin-like activity. Plays a major role in the degradation of misfolded proteins. This is ATP-dependent Clp protease proteolytic subunit from Sphingopyxis alaskensis (strain DSM 13593 / LMG 18877 / RB2256) (Sphingomonas alaskensis).